A 214-amino-acid polypeptide reads, in one-letter code: ATP-dependent Clp protease proteolytic subunit (214 aa).

The active-site Nucleophile is the serine 110. Histidine 135 is a catalytic residue.

It belongs to the peptidase S14 family. As to quaternary structure, fourteen ClpP subunits assemble into 2 heptameric rings which stack back to back to give a disk-like structure with a central cavity, resembling the structure of eukaryotic proteasomes.

Its subcellular location is the cytoplasm. It catalyses the reaction Hydrolysis of proteins to small peptides in the presence of ATP and magnesium. alpha-casein is the usual test substrate. In the absence of ATP, only oligopeptides shorter than five residues are hydrolyzed (such as succinyl-Leu-Tyr-|-NHMec, and Leu-Tyr-Leu-|-Tyr-Trp, in which cleavage of the -Tyr-|-Leu- and -Tyr-|-Trp bonds also occurs).. Functionally, cleaves peptides in various proteins in a process that requires ATP hydrolysis. Has a chymotrypsin-like activity. Plays a major role in the degradation of misfolded proteins. This Legionella pneumophila (strain Paris) protein is ATP-dependent Clp protease proteolytic subunit.